Here is a 369-residue protein sequence, read N- to C-terminus: Epoxyqueuosine reductase (369 aa).

Asp-135 acts as the Proton donor in catalysis. The 4Fe-4S ferredoxin-type domain maps to 177–209; sequence IPLPVDEPSENQCGKCTACITSCPTNAIVAEGV. [4Fe-4S] cluster-binding residues include Cys-189, Cys-192, Cys-195, Cys-199, Cys-215, Cys-242, Cys-245, and Cys-249.

It belongs to the QueG family. In terms of assembly, monomer. Cob(II)alamin is required as a cofactor. Requires [4Fe-4S] cluster as cofactor.

The protein localises to the cytoplasm. It catalyses the reaction epoxyqueuosine(34) in tRNA + AH2 = queuosine(34) in tRNA + A + H2O. Its pathway is tRNA modification; tRNA-queuosine biosynthesis. In terms of biological role, catalyzes the conversion of epoxyqueuosine (oQ) to queuosine (Q), which is a hypermodified base found in the wobble positions of tRNA(Asp), tRNA(Asn), tRNA(His) and tRNA(Tyr). In Vibrio cholerae serotype O1 (strain ATCC 39315 / El Tor Inaba N16961), this protein is Epoxyqueuosine reductase.